The chain runs to 245 residues: Orotidine 5'-phosphate decarboxylase (245 aa).

Substrate-binding positions include D22, K44, 71 to 80 (DLKFHDIPNT), T131, R192, Q201, G221, and R222. K73 serves as the catalytic Proton donor.

This sequence belongs to the OMP decarboxylase family. Type 1 subfamily. As to quaternary structure, homodimer.

The catalysed reaction is orotidine 5'-phosphate + H(+) = UMP + CO2. It functions in the pathway pyrimidine metabolism; UMP biosynthesis via de novo pathway; UMP from orotate: step 2/2. In terms of biological role, catalyzes the decarboxylation of orotidine 5'-monophosphate (OMP) to uridine 5'-monophosphate (UMP). In Salmonella paratyphi A (strain ATCC 9150 / SARB42), this protein is Orotidine 5'-phosphate decarboxylase.